A 376-amino-acid chain; its full sequence is Putative endoglucanase type K (376 aa).

A signal peptide spans 1–18 (MRSYTLLALAGPLAVSAA). Residues 19-308 (SGSGHSTRYW…ATKPAQPVNK (290 aa)) form a catalytic region. Asp29 functions as the Nucleophile in the catalytic mechanism. The Proton donor role is filled by Asp140. A disordered region spans residues 229 to 332 (AFKGDTSASK…SCPAKTDATA (104 aa)). Low complexity-rich tracts occupy residues 235 to 258 (SASK…AQPQ) and 291 to 306 (KPVA…AQPV). The linker stretch occupies residues 309-338 (PKTTQKVRGTKTRGSCPAKTDATAKASVVP). Positions 335–374 (SVVPAYYQCGGSKSAYPNGNLACATGSKCVKQNEYYSQCV) constitute a CBM1 domain.

This sequence belongs to the glycosyl hydrolase 45 (cellulase K) family.

The enzyme catalyses Endohydrolysis of (1-&gt;4)-beta-D-glucosidic linkages in cellulose, lichenin and cereal beta-D-glucans.. In Fusarium oxysporum (Fusarium vascular wilt), this protein is Putative endoglucanase type K.